The following is an 872-amino-acid chain: Alanine--tRNA ligase (872 aa).

Zn(2+)-binding residues include His-567, His-571, Cys-669, and His-673.

It belongs to the class-II aminoacyl-tRNA synthetase family. Requires Zn(2+) as cofactor.

The protein localises to the cytoplasm. The enzyme catalyses tRNA(Ala) + L-alanine + ATP = L-alanyl-tRNA(Ala) + AMP + diphosphate. Catalyzes the attachment of alanine to tRNA(Ala) in a two-step reaction: alanine is first activated by ATP to form Ala-AMP and then transferred to the acceptor end of tRNA(Ala). Also edits incorrectly charged Ser-tRNA(Ala) and Gly-tRNA(Ala) via its editing domain. This chain is Alanine--tRNA ligase, found in Streptococcus suis (strain 98HAH33).